The primary structure comprises 2352 residues: Ectopic P granules protein 5 (2352 aa).

Disordered regions lie at residues 1–112 (MAEL…IFPR) and 1315–1335 (KNRE…SSAK). The segment covering 66–81 (DSLKREEASEPLKDVR) has biased composition (basic and acidic residues).

Belongs to the EPG5 family. As to expression, expressed in pharyngeal and body wall muscles and intestine cells.

Its subcellular location is the cytoplasm. The protein localises to the cytoplasmic vesicle. It localises to the phagosome membrane. In terms of biological role, involved in the maturation of autophagosomes into autolysosomes during starvation-induced autotrophy. Specifically, involved in the clearance of apoptotic cells by promoting the delivery of engulfed apoptotic cells to the lysosome. This chain is Ectopic P granules protein 5, found in Caenorhabditis elegans.